A 368-amino-acid polypeptide reads, in one-letter code: uncharacterized protein (368 aa).

It belongs to the YCR102c/YLR460c/YNL134c family.

This is an uncharacterized protein from Saccharomyces cerevisiae (strain ATCC 204508 / S288c) (Baker's yeast).